Here is a 336-residue protein sequence, read N- to C-terminus: Fructose-1,6-bisphosphatase class 1 (336 aa).

Residues Glu92, Asp115, Leu117, and Asp118 each coordinate Mg(2+). Substrate-binding positions include 118–121 (DGSS), Asn211, Tyr244, 262–264 (YLY), and Lys274. Glu280 is a Mg(2+) binding site.

This sequence belongs to the FBPase class 1 family. As to quaternary structure, homotetramer. The cofactor is Mg(2+).

The protein localises to the cytoplasm. The enzyme catalyses beta-D-fructose 1,6-bisphosphate + H2O = beta-D-fructose 6-phosphate + phosphate. It participates in carbohydrate biosynthesis; gluconeogenesis. The protein is Fructose-1,6-bisphosphatase class 1 of Hahella chejuensis (strain KCTC 2396).